The sequence spans 159 residues: 3-hydroxyacyl-[acyl-carrier-protein] dehydratase FabZ (159 aa).

H58 is a catalytic residue.

The protein belongs to the thioester dehydratase family. FabZ subfamily.

It is found in the cytoplasm. The catalysed reaction is a (3R)-hydroxyacyl-[ACP] = a (2E)-enoyl-[ACP] + H2O. Involved in unsaturated fatty acids biosynthesis. Catalyzes the dehydration of short chain beta-hydroxyacyl-ACPs and long chain saturated and unsaturated beta-hydroxyacyl-ACPs. The sequence is that of 3-hydroxyacyl-[acyl-carrier-protein] dehydratase FabZ from Helicobacter pylori (strain HPAG1).